Here is a 354-residue protein sequence, read N- to C-terminus: Coiled-coil domain-containing protein 86 (354 aa).

Residues 1–354 (MDTPLRRSRR…QPPQRPATKV (354 aa)) form a disordered region. Phosphoserine is present on residues Ser18 and Ser24. The segment covering 31–44 (VLVEFESNPKETGE) has biased composition (basic and acidic residues). Ser47 and Ser53 each carry phosphoserine. Residues 49–58 (PGLGSPSRQP) show a composition bias toward low complexity. Residue Thr60 is modified to Phosphothreonine. Ser61, Ser64, Ser75, Ser86, Ser105, Ser108, Ser123, and Ser183 each carry phosphoserine. The span at 97-107 (FPQNQPESSPE) shows a compositional bias: polar residues. Residues 199–211 (PAREGPAPKKREG) are compositionally biased toward basic and acidic residues. Residues Ser212 and Ser213 each carry the phosphoserine modification. Residues 232–248 (GKPKSGRVWKDRSKKRF) show a composition bias toward basic residues. 2 stretches are compositionally biased toward basic and acidic residues: residues 267–289 (DRQE…ERRR) and 297–311 (AENL…RKAE). Residues 274 to 317 (AKDFARHLEEEKERRRQEKKKRRAENLRRRLENERKAEIVQVIR) are a coiled coil. Basic residues predominate over residues 320–330 (AKLKRAKKKQL). Arg336 bears the Citrulline mark.

In terms of processing, citrullinated by PADI4.

The protein resides in the nucleus. It localises to the chromosome. The protein localises to the nucleolus. Required for proper chromosome segregation during mitosis and error-free mitotic progression. This Bos taurus (Bovine) protein is Coiled-coil domain-containing protein 86.